The following is a 389-amino-acid chain: Galactokinase (389 aa).

34 to 37 contacts substrate; sequence EHTD. Residues Ser68 and 125-131 contribute to the ATP site; that span reads GSGLSSS. Mg(2+) contacts are provided by Ser131 and Glu163. Catalysis depends on Asp175, which acts as the Proton acceptor. Tyr225 is a binding site for substrate.

It belongs to the GHMP kinase family. GalK subfamily.

It localises to the cytoplasm. It carries out the reaction alpha-D-galactose + ATP = alpha-D-galactose 1-phosphate + ADP + H(+). Its pathway is carbohydrate metabolism; galactose metabolism. Functionally, catalyzes the transfer of the gamma-phosphate of ATP to D-galactose to form alpha-D-galactose-1-phosphate (Gal-1-P). This Clostridium beijerinckii (strain ATCC 51743 / NCIMB 8052) (Clostridium acetobutylicum) protein is Galactokinase.